A 518-amino-acid polypeptide reads, in one-letter code: G1/S-specific cyclin-E (518 aa).

The disordered stretch occupies residues 1–193 (MAGRKSSRTT…DEETEDEFDL (193 aa)). The segment covering 13 to 46 (PVKKAERKSAILSPHDELRERLLETSLDVKENIP) has biased composition (basic and acidic residues). Positions 47 to 62 (ERSSSTRNESVGSQRS) are enriched in polar residues. Positions 82-107 (PSTEKKGNGSRDDSFSSVFSEDRETE) are enriched in basic and acidic residues. A compositionally biased stretch (low complexity) spans 108-119 (SSVGSTSSRTRG). The span at 135-154 (SSDHNAESEESRETPQSDEH) shows a compositional bias: basic and acidic residues. A compositionally biased stretch (acidic residues) spans 155–192 (DGFEEDGDVEDDVSSDVNDEEDEYDEYEEDEETEDEFD).

This sequence belongs to the cyclin family. Cyclin E subfamily. In terms of assembly, interacts with a member of the CDK2/CDK protein kinases to form a serine/threonine kinase holoenzyme complex. The cyclin subunit imparts substrate specificity to the complex.

It is found in the nucleus. Its subcellular location is the cytoplasm. It localises to the cytoskeleton. The protein localises to the microtubule organizing center. The protein resides in the centrosome. It is found in the centriole. Essential for the control of the cell cycle at the G1/S (start) transition. In association with cdk-2, regulates proliferation, quiescent state and cell fate during the development of several cell lineages. In the embryo, initiates the establishment of cell polarity through the recruitment of the centrosomal proteins spd-2 and spd-5 during prophase. During the development of the vulva, controls the onset of vulval cell terminal differentiation by controlling the duration of G1 phase. During hypoderm development at early larval stages, controls syncytial fate of seam cell daughter cells. Involved in the progression of cell division in the intestinal lineage in larvae, and in particular in endoreplication, a specific growth pathway in the intestinal epithelium, required for feeding and gut development in growing larvae. By controlling the activity of translational repressor gld-1, regulates the pool of germline stem cells and the size of the mitotic zone by preventing entry into meiosis. In addition, repression of expression by gld-1 prevents mitosis re-entry in meiotic germline cells. The sequence is that of G1/S-specific cyclin-E (cye-1) from Caenorhabditis briggsae.